The chain runs to 90 residues: Phosphocarrier protein NPr (90 aa).

Residues 2 to 90 enclose the HPr domain; sequence TQYRRVAIKN…ALFESGFDED (89 aa). Residue His16 is the Pros-phosphohistidine intermediate of the active site.

Belongs to the HPr family.

It is found in the cytoplasm. Component of the phosphoenolpyruvate-dependent nitrogen-metabolic phosphotransferase system (nitrogen-metabolic PTS), that seems to be involved in regulating nitrogen metabolism. The phosphoryl group from phosphoenolpyruvate (PEP) is transferred to the phosphoryl carrier protein NPr by enzyme I-Ntr. Phospho-NPr then transfers it to EIIA-Ntr. Could function in the transcriptional regulation of sigma-54 dependent operons in conjunction with the NPr (PtsO) and EIIA-Ntr (PtsN) proteins. The protein is Phosphocarrier protein NPr (ptsO) of Proteus mirabilis (strain HI4320).